Consider the following 115-residue polypeptide: Putative HNH nuclease YajD (115 aa).

The 49-residue stretch at 27–75 (CGRCSREFVYSNLRELTVHHIDHDHTNNPEDGSNWELLCLYCHDHEHSK) folds into the HNH domain.

It belongs to the HNH nuclease family.

This is Putative HNH nuclease YajD (yajD) from Salmonella typhi.